The following is a 396-amino-acid chain: S-adenosylmethionine synthase (396 aa).

His-16 is a binding site for ATP. Asp-18 lines the Mg(2+) pocket. Glu-44 lines the K(+) pocket. The L-methionine site is built by Glu-57 and Gln-100. Residues 100 to 110 (QSVDIAQGVDR) form a flexible loop region. Residues 165 to 167 (DAK), Asp-240, 246 to 247 (RK), Ala-263, and Lys-267 contribute to the ATP site. Asp-240 provides a ligand contact to L-methionine. Lys-271 lines the L-methionine pocket.

The protein belongs to the AdoMet synthase family. As to quaternary structure, homotetramer; dimer of dimers. Requires Mg(2+) as cofactor. The cofactor is K(+).

It is found in the cytoplasm. It catalyses the reaction L-methionine + ATP + H2O = S-adenosyl-L-methionine + phosphate + diphosphate. The protein operates within amino-acid biosynthesis; S-adenosyl-L-methionine biosynthesis; S-adenosyl-L-methionine from L-methionine: step 1/1. Functionally, catalyzes the formation of S-adenosylmethionine (AdoMet) from methionine and ATP. The overall synthetic reaction is composed of two sequential steps, AdoMet formation and the subsequent tripolyphosphate hydrolysis which occurs prior to release of AdoMet from the enzyme. This chain is S-adenosylmethionine synthase, found in Pseudomonas syringae pv. syringae (strain B728a).